A 369-amino-acid polypeptide reads, in one-letter code: tRNA/tmRNA (uracil-C(5))-methyltransferase (369 aa).

5 residues coordinate S-adenosyl-L-methionine: glutamine 193, tyrosine 221, asparagine 226, glutamate 242, and aspartate 302. Cysteine 327 (nucleophile) is an active-site residue. Glutamate 361 acts as the Proton acceptor in catalysis.

Belongs to the class I-like SAM-binding methyltransferase superfamily. RNA M5U methyltransferase family. TrmA subfamily.

The catalysed reaction is uridine(54) in tRNA + S-adenosyl-L-methionine = 5-methyluridine(54) in tRNA + S-adenosyl-L-homocysteine + H(+). The enzyme catalyses uridine(341) in tmRNA + S-adenosyl-L-methionine = 5-methyluridine(341) in tmRNA + S-adenosyl-L-homocysteine + H(+). Its function is as follows. Dual-specificity methyltransferase that catalyzes the formation of 5-methyluridine at position 54 (m5U54) in all tRNAs, and that of position 341 (m5U341) in tmRNA (transfer-mRNA). The sequence is that of tRNA/tmRNA (uracil-C(5))-methyltransferase from Actinobacillus succinogenes (strain ATCC 55618 / DSM 22257 / CCUG 43843 / 130Z).